The chain runs to 446 residues: uncharacterized protein (446 aa).

Residues 141–282 (TEAETNGTRP…GPKPKVKRVS (142 aa)) form a disordered region. Over residues 159 to 170 (NSGSKPKAGTQS) the composition is skewed to polar residues. The segment covering 194–210 (IKSERRSISQGGEKDKA) has biased composition (basic and acidic residues). Phosphoserine is present on residues serine 200, serine 202, serine 212, and serine 214. Low complexity-rich tracts occupy residues 211 to 221 (SSSSPSSSQQS) and 229 to 239 (SPSQQNSRSSS). At serine 251 the chain carries Phosphoserine. Positions 269–280 (GKSRGPKPKVKR) are enriched in basic residues. 2 positions are modified to phosphoserine: serine 282 and serine 307.

This is an uncharacterized protein from Drosophila melanogaster (Fruit fly).